The chain runs to 513 residues: 2,3-bisphosphoglycerate-independent phosphoglycerate mutase (513 aa).

The Mn(2+) site is built by Asp-12 and Ser-62. Ser-62 serves as the catalytic Phosphoserine intermediate. Residues His-123, Arg-153–Asp-154, Arg-185, Arg-191, Arg-261–Arg-264, and Lys-335 each bind substrate. Mn(2+) is bound by residues Asp-402, His-406, Asp-443, His-444, and His-462.

It belongs to the BPG-independent phosphoglycerate mutase family. In terms of assembly, monomer. Mn(2+) is required as a cofactor.

The catalysed reaction is (2R)-2-phosphoglycerate = (2R)-3-phosphoglycerate. It participates in carbohydrate degradation; glycolysis; pyruvate from D-glyceraldehyde 3-phosphate: step 3/5. Catalyzes the interconversion of 2-phosphoglycerate and 3-phosphoglycerate. This chain is 2,3-bisphosphoglycerate-independent phosphoglycerate mutase, found in Thiobacillus denitrificans (strain ATCC 25259 / T1).